The sequence spans 512 residues: Cytochrome P450 1A1 (512 aa).

Residues 29–40 (SRPRVPKGLKNP) form a mitochondrial targeting signal region. Residue S67 is glycosylated (O-linked (GlcNAc) serine). F224 is a binding site for substrate. C457 is a binding site for heme.

It belongs to the cytochrome P450 family. Interacts with cytosolic chaperones HSP70 and HSP90; this interaction is required for initial targeting to mitochondria. Interacts (via mitochondrial targeting signal) with TOMM40 (via N-terminus); this interaction is required for translocation across the mitochondrial outer membrane. The cofactor is heme.

Its subcellular location is the endoplasmic reticulum membrane. It localises to the mitochondrion inner membrane. The protein resides in the microsome membrane. The protein localises to the cytoplasm. It catalyses the reaction an organic molecule + reduced [NADPH--hemoprotein reductase] + O2 = an alcohol + oxidized [NADPH--hemoprotein reductase] + H2O + H(+). It carries out the reaction estrone + reduced [NADPH--hemoprotein reductase] + O2 = 2-hydroxyestrone + oxidized [NADPH--hemoprotein reductase] + H2O + H(+). The catalysed reaction is estrone + reduced [NADPH--hemoprotein reductase] + O2 = 4-hydroxyestrone + oxidized [NADPH--hemoprotein reductase] + H2O + H(+). The enzyme catalyses estrone + reduced [NADPH--hemoprotein reductase] + O2 = 6alpha-hydroxyestrone + oxidized [NADPH--hemoprotein reductase] + H2O + H(+). It catalyses the reaction estrone + reduced [NADPH--hemoprotein reductase] + O2 = 15alpha-hydroxyestrone + oxidized [NADPH--hemoprotein reductase] + H2O + H(+). It carries out the reaction estrone + reduced [NADPH--hemoprotein reductase] + O2 = 16alpha-hydroxyestrone + oxidized [NADPH--hemoprotein reductase] + H2O + H(+). The catalysed reaction is 17beta-estradiol + reduced [NADPH--hemoprotein reductase] + O2 = 2-hydroxy-17beta-estradiol + oxidized [NADPH--hemoprotein reductase] + H2O + H(+). The enzyme catalyses 17beta-estradiol + reduced [NADPH--hemoprotein reductase] + O2 = 4-hydroxy-17beta-estradiol + oxidized [NADPH--hemoprotein reductase] + H2O + H(+). It catalyses the reaction 17beta-estradiol + reduced [NADPH--hemoprotein reductase] + O2 = 6alpha-hydroxy-17beta-estradiol + oxidized [NADPH--hemoprotein reductase] + H2O + H(+). It carries out the reaction 17beta-estradiol + reduced [NADPH--hemoprotein reductase] + O2 = 7alpha-hydroxy-17beta-estradiol + oxidized [NADPH--hemoprotein reductase] + H2O + H(+). The catalysed reaction is 17beta-estradiol + reduced [NADPH--hemoprotein reductase] + O2 = 15alpha-hydroxy-17beta-estradiol + oxidized [NADPH--hemoprotein reductase] + H2O + H(+). The enzyme catalyses (5Z,8Z,11Z)-eicosatrienoate + reduced [NADPH--hemoprotein reductase] + O2 = 19-hydroxy-(5Z,8Z,11Z)-eicosatrienoate + oxidized [NADPH--hemoprotein reductase] + H2O + H(+). It catalyses the reaction (5Z,8Z,11Z,14Z)-eicosatetraenoate + reduced [NADPH--hemoprotein reductase] + O2 = 16-hydroxy-(5Z,8Z,11Z,14Z)-eicosatetraenoate + oxidized [NADPH--hemoprotein reductase] + H2O + H(+). It carries out the reaction (5Z,8Z,11Z,14Z)-eicosatetraenoate + reduced [NADPH--hemoprotein reductase] + O2 = 17-hydroxy-(5Z,8Z,11Z,14Z)-eicosatetraenoate + oxidized [NADPH--hemoprotein reductase] + H2O + H(+). The catalysed reaction is (5Z,8Z,11Z,14Z)-eicosatetraenoate + reduced [NADPH--hemoprotein reductase] + O2 = 18-hydroxy-(5Z,8Z,11Z,14Z)-eicosatetraenoate + oxidized [NADPH--hemoprotein reductase] + H2O + H(+). The enzyme catalyses (5Z,8Z,11Z,14Z)-eicosatetraenoate + reduced [NADPH--hemoprotein reductase] + O2 = 19-hydroxy-(5Z,8Z,11Z,14Z)-eicosatetraenoate + oxidized [NADPH--hemoprotein reductase] + H2O + H(+). It catalyses the reaction (5Z,8Z,11Z,14Z,17Z)-eicosapentaenoate + reduced [NADPH--hemoprotein reductase] + O2 = 19-hydroxy-(5Z,8Z,11Z,14Z,17Z)-eicosapentaenoate + oxidized [NADPH--hemoprotein reductase] + H2O + H(+). It carries out the reaction (5Z,8Z,11Z,14Z)-eicosatetraenoate + reduced [NADPH--hemoprotein reductase] + O2 = (8R,9S)-epoxy-(5Z,11Z,14Z)-eicosatrienoate + oxidized [NADPH--hemoprotein reductase] + H2O + H(+). The catalysed reaction is (5Z,8Z,11Z,14Z)-eicosatetraenoate + reduced [NADPH--hemoprotein reductase] + O2 = (11R,12S)-epoxy-(5Z,8Z,14Z)-eicosatrienoate + oxidized [NADPH--hemoprotein reductase] + H2O + H(+). The enzyme catalyses (5Z,8Z,11Z,14Z)-eicosatetraenoate + reduced [NADPH--hemoprotein reductase] + O2 = (14S,15R)-epoxy-(5Z,8Z,11Z)-eicosatrienoate + oxidized [NADPH--hemoprotein reductase] + H2O + H(+). It catalyses the reaction (5Z,8Z,11Z,14Z)-eicosatetraenoate + reduced [NADPH--hemoprotein reductase] + O2 = (14R,15S)-epoxy-(5Z,8Z,11Z)-eicosatrienoate + oxidized [NADPH--hemoprotein reductase] + H2O + H(+). It carries out the reaction (5Z,8Z,11Z,14Z,17Z)-eicosapentaenoate + reduced [NADPH--hemoprotein reductase] + O2 = (17R,18S)-epoxy-(5Z,8Z,11Z,14Z)-eicosatetraenoate + oxidized [NADPH--hemoprotein reductase] + H2O + H(+). The catalysed reaction is (4Z,7Z,10Z,13Z,16Z,19Z)-docosahexaenoate + reduced [NADPH--hemoprotein reductase] + O2 = (19S,20R)-epoxy-(4Z,7Z,10Z,13Z,16Z)-docosapentaenoate + oxidized [NADPH--hemoprotein reductase] + H2O + H(+). The enzyme catalyses (4Z,7Z,10Z,13Z,16Z,19Z)-docosahexaenoate + reduced [NADPH--hemoprotein reductase] + O2 = (19R,20S)-epoxy-(4Z,7Z,10Z,13Z,16Z)-docosapentaenoate + oxidized [NADPH--hemoprotein reductase] + H2O + H(+). It catalyses the reaction all-trans-retinol + reduced [NADPH--hemoprotein reductase] + O2 = all-trans-retinal + oxidized [NADPH--hemoprotein reductase] + 2 H2O + H(+). It carries out the reaction all-trans-retinal + reduced [NADPH--hemoprotein reductase] + O2 = all-trans-retinoate + oxidized [NADPH--hemoprotein reductase] + H2O + 2 H(+). The catalysed reaction is (13S)-hydroperoxy-(9Z,11E)-octadecadienoate = 13-oxo-(9Z,11E)-octadecadienoate + H2O. The enzyme catalyses (12S)-hydroperoxy-(5Z,8Z,10E,14Z)-eicosatetraenoate = 12-oxo-(5Z,8Z,10E,14Z)-eicosatetraenoate + H2O. It catalyses the reaction (15S)-hydroperoxy-(5Z,8Z,11Z,13E)-eicosatetraenoate = 15-oxo-(5Z,8Z,11Z,13E)-eicosatetraenoate + H2O. It carries out the reaction (5S)-hydroperoxy-(6E,8Z,11Z,14Z)-eicosatetraenoate = 5-oxo-(6E,8Z,11Z,14Z)-eicosatetraenoate + H2O. It functions in the pathway steroid hormone biosynthesis. Its pathway is lipid metabolism; fatty acid metabolism. It participates in cofactor metabolism; retinol metabolism. Its function is as follows. A cytochrome P450 monooxygenase involved in the metabolism of various endogenous substrates, including fatty acids, steroid hormones and vitamins. Mechanistically, uses molecular oxygen inserting one oxygen atom into a substrate, and reducing the second into a water molecule, with two electrons provided by NADPH via cytochrome P450 reductase (CPR; NADPH-ferrihemoprotein reductase). Catalyzes the hydroxylation of carbon-hydrogen bonds. Exhibits high catalytic activity for the formation of hydroxyestrogens from estrone (E1) and 17beta-estradiol (E2), namely 2-hydroxy E1 and E2, as well as D-ring hydroxylated E1 and E2 at the C15alpha and C16alpha positions. Displays different regioselectivities for polyunsaturated fatty acids (PUFA) hydroxylation. Catalyzes the epoxidation of double bonds of certain PUFA. Converts arachidonic acid toward epoxyeicosatrienoic acid (EET) regioisomers, 8,9-, 11,12-, and 14,15-EET, that function as lipid mediators in the vascular system. Displays an absolute stereoselectivity in the epoxidation of eicosapentaenoic acid (EPA) producing the 17(R),18(S) enantiomer. May play an important role in all-trans retinoic acid biosynthesis in extrahepatic tissues. Catalyzes two successive oxidative transformation of all-trans retinol to all-trans retinal and then to the active form all-trans retinoic acid. May also participate in eicosanoids metabolism by converting hydroperoxide species into oxo metabolites (lipoxygenase-like reaction, NADPH-independent). The polypeptide is Cytochrome P450 1A1 (CYP1A1) (Macaca fascicularis (Crab-eating macaque)).